The primary structure comprises 376 residues: 26S proteasome non-ATPase regulatory subunit 4 (376 aa).

Residues 5–188 (STMVCVDNSE…LADALISSPI (184 aa)) enclose the VWFA domain. K122 is covalently cross-linked (Glycyl lysine isopeptide (Lys-Gly) (interchain with G-Cter in SUMO2)). Positions 197-262 (LGLGASDFEF…TEDSDDALLK (66 aa)) are interaction with UBQLN1. The 20-residue stretch at 211-230 (SADPELALALRVSMEEQRQR) folds into the UIM 1 domain. Positions 224–237 (MEEQRQRQEEEARR) are enriched in basic and acidic residues. Residues 224-257 (MEEQRQRQEEEARRAAAASAAEAGIATPGTEDSD) form a disordered region. 2 positions are modified to phosphothreonine: T250 and T253. A phosphoserine mark is found at S256 and A259. The region spanning 282–301 (TEEEQIAYAMQMSLQGTEFS) is the UIM 2 domain. Residues 355 to 376 (MGALASQATKDGKNDKKEEEKK) form a disordered region. S360 bears the Phosphoserine mark. Positions 364–376 (KDGKNDKKEEEKK) are enriched in basic and acidic residues.

The protein belongs to the proteasome subunit S5A family. Component of the 19S proteasome regulatory particle complex. The 26S proteasome consists of a 20S core particle (CP) and two 19S regulatory subunits (RP). The regulatory particle is made of a lid composed of 9 subunits, a base containing 6 ATPases and few additional components including PSMD4. Interacts with NUB1. Interacts with SQSTM1. Interacts with UBQLN4. Interacts with UBE3A. Interacts with UBQLN1 (via ubiquitin-like domain). Interacts with DDI2. In terms of tissue distribution, isoform Rpn10A is ubiquitous whereas isoform Rpn10E is mostly expressed in the embryonic brain.

Its function is as follows. Component of the 26S proteasome, a multiprotein complex involved in the ATP-dependent degradation of ubiquitinated proteins. This complex plays a key role in the maintenance of protein homeostasis by removing misfolded or damaged proteins, which could impair cellular functions, and by removing proteins whose functions are no longer required. Therefore, the proteasome participates in numerous cellular processes, including cell cycle progression, apoptosis, or DNA damage repair. PSMD4 acts as an ubiquitin receptor subunit through ubiquitin-interacting motifs and selects ubiquitin-conjugates for destruction. Displays a preferred selectivity for longer polyubiquitin chains. This chain is 26S proteasome non-ATPase regulatory subunit 4 (Psmd4), found in Mus musculus (Mouse).